Here is a 187-residue protein sequence, read N- to C-terminus: uncharacterized protein (187 aa).

An N-terminal signal peptide occupies residues 1 to 17 (MYAGGRVVRSAFARGKV). A lipid anchor (N-palmitoyl cysteine) is attached at Cys18. Residue Cys18 is the site of S-diacylglycerol cysteine attachment.

It localises to the cell membrane. This is an uncharacterized protein from Treponema pallidum (strain Nichols).